We begin with the raw amino-acid sequence, 266 residues long: Thymidylate synthase (266 aa).

Residue arginine 24 participates in dUMP binding. Histidine 54 provides a ligand contact to (6R)-5,10-methylene-5,6,7,8-tetrahydrofolate. 129–130 (RR) serves as a coordination point for dUMP. The active-site Nucleophile is cysteine 149. DUMP-binding positions include 169-172 (RSAD), asparagine 180, and 210-212 (HIY). Aspartate 172 is a (6R)-5,10-methylene-5,6,7,8-tetrahydrofolate binding site. Alanine 265 serves as a coordination point for (6R)-5,10-methylene-5,6,7,8-tetrahydrofolate.

Belongs to the thymidylate synthase family. Bacterial-type ThyA subfamily. In terms of assembly, homodimer.

Its subcellular location is the cytoplasm. It catalyses the reaction dUMP + (6R)-5,10-methylene-5,6,7,8-tetrahydrofolate = 7,8-dihydrofolate + dTMP. It participates in pyrimidine metabolism; dTTP biosynthesis. Functionally, catalyzes the reductive methylation of 2'-deoxyuridine-5'-monophosphate (dUMP) to 2'-deoxythymidine-5'-monophosphate (dTMP) while utilizing 5,10-methylenetetrahydrofolate (mTHF) as the methyl donor and reductant in the reaction, yielding dihydrofolate (DHF) as a by-product. This enzymatic reaction provides an intracellular de novo source of dTMP, an essential precursor for DNA biosynthesis. This chain is Thymidylate synthase, found in Mycobacterium avium (strain 104).